We begin with the raw amino-acid sequence, 445 residues long: MKVKVLCRNPDDYVRETKRDLQRVPRNYDPALHPFEVPREYTRALNATKLERVFAKPFIASLDGHRDGVNCIAKHPKSLSTVLSGACDGEVKIWNLTKRECSRTIQAHDGFVRGLCVRFCGTSFFTVGDDKTVKQWSMESPGYGEKVEPIRTILGKTVFTGIDHHMNDAIFATCGQQVDIWDEQRSAPMRSYAWGVDSISSIKFNPIETHILSSCGTDRSIVLYDKRKPTPLKKIILEMRTNTLCWNPMEAFIFTAANENFNLYTYDMRYMDGPVKVHMDHVSAVLDVDYSPTGKEFVSASFDKSIRIFPVQSGHSREVYHTKRMQHVTCVRWSADNKYVLCGSDEMNIRIWKANASEKLGLLSPRERAAQNYNQKLKEKFHHHPQIKRIARHRHLPRSIYSQIKEQQIMREARRKKDVNRRKHSKPGSVPIPSEKKKHVLAVVE.

WD repeat units follow at residues glycine 64–threonine 104, alanine 107–lysine 146, leucine 154–serine 191, tryptophan 194–lysine 234, isoleucine 236–lysine 276, aspartate 280–valine 319, and lysine 323–leucine 362. A required for nucleolar location region spans residues lysine 353–leucine 441. Composition is skewed to basic residues over residues alanine 413–lysine 426 and lysine 436–glutamate 445. A disordered region spans residues alanine 413–glutamate 445.

This sequence belongs to the WD repeat DCAF13/WDSOF1 family. In terms of assembly, part of the small subunit (SSU) processome, composed of more than 70 proteins and the RNA chaperone small nucleolar RNA (snoRNA) U3. Component of the DCX(DCAF13) E3 ubiquitin ligase complex, at least composed of CUL4 (CUL4A or CUL4B), DDB1, DCAF13 and RBX1.

The protein resides in the nucleus. The protein localises to the nucleolus. It functions in the pathway protein modification; protein ubiquitination. Functionally, part of the small subunit (SSU) processome, first precursor of the small eukaryotic ribosomal subunit. During the assembly of the SSU processome in the nucleolus, many ribosome biogenesis factors, an RNA chaperone and ribosomal proteins associate with the nascent pre-rRNA and work in concert to generate RNA folding, modifications, rearrangements and cleavage as well as targeted degradation of pre-ribosomal RNA by the RNA exosome. In terms of biological role, substrate-recognition component of a DCX (DDB1-CUL4-X-box) E3 ubiquitin-protein ligase complex. This Xenopus tropicalis (Western clawed frog) protein is DDB1- and CUL4-associated factor 13 (dcaf13).